Here is a 493-residue protein sequence, read N- to C-terminus: Lysostaphin (493 aa).

A signal peptide spans 1 to 23; it reads MKKTKNNYYTRPLAIGLSTFALA. Residues 24 to 247 constitute a propeptide that is removed on maturation; it reads SIVYGGIQNE…ALVQNRTALR (224 aa). 14 repeat units span residues 49–61, 62–74, 75–87, 88–100, 101–113, 114–126, 127–139, 140–152, 153–165, 166–178, 179–191, 192–204, 205–217, and 218–230. The segment at 49 to 243 is 15 X 13 AA approximate tandem repeats of A-E-V-E-T-S-K-A-P-V-E-N-T; it reads AEVETSKAPV…ETSKALVQNR (195 aa). Positions 52-232 are disordered; it reads ETSKAPVENT…SKAPVENTAE (181 aa). The 15; approximate repeat unit spans residues 231–243; that stretch reads AEVETSKALVQNR. Histidine 279 and aspartate 283 together coordinate Zn(2+). Residue histidine 360 is part of the active site. Histidine 362 contributes to the Zn(2+) binding site. The SH3b domain maps to 413-481; the sequence is SESASFTPNT…YLPVRTWNKS (69 aa).

The protein belongs to the peptidase M23B family. Monomer. Zn(2+) is required as a cofactor.

Its subcellular location is the secreted. It carries out the reaction Hydrolysis of the -Gly-|-Gly- bond in the pentaglycine inter-peptide link joining staphylococcal cell wall peptidoglycans.. In terms of biological role, lyses staphylococcal cells by hydrolyzing the polyglycine interpeptide bridges of the peptidoglycan. The protein is Lysostaphin (lss) of Staphylococcus simulans.